The chain runs to 198 residues: MLTMFKVEIVQLPKKVLRQKSKNVNIPLNKTNIELAEKMIYHIDDSQGPNTKFRPGVGVAAVQYGILKNVFYVCVPNDSRLTQRDSSQEVKPEDKYLFRDVIFNPEVIWKSDEMVAISQGEGCLSVDESWPNQEGLVRRHMEIKVKGYSYFQKKEMIWHVKGYVAIVFQHELDHLNGMLFIDRIDPKRLWDKSGIKVL.

Fe cation-binding residues include C123 and H170. E171 is an active-site residue. H174 lines the Fe cation pocket.

Belongs to the polypeptide deformylase family. Requires Fe(2+) as cofactor.

It carries out the reaction N-terminal N-formyl-L-methionyl-[peptide] + H2O = N-terminal L-methionyl-[peptide] + formate. Its function is as follows. Removes the formyl group from the N-terminal Met of newly synthesized proteins. Requires at least a dipeptide for an efficient rate of reaction. N-terminal L-methionine is a prerequisite for activity but the enzyme has broad specificity at other positions. This Mycoplasmopsis pulmonis (strain UAB CTIP) (Mycoplasma pulmonis) protein is Peptide deformylase.